We begin with the raw amino-acid sequence, 1232 residues long: MAEAASGAGGTSLEGERGKRPPPEGEPAAPASGVLDKLFGKRLLQAGRYLVSHKAWMKTVPTENCDVLMTFPDTTDDHTLLWLLNHIRVGIPELIVQVRHHRHTRAYAFFVTATYESLLRGADELGLRKAVKAEFGGGTRGFSCEEDFIYENVESELRFFTSQERQSIIRFWLQNLRAKQGEALHNVRFLEDQPIIPELAARGIIQQVFPVHEQRILNRLMKSWVQAVCENQPLDDICDYFGVKIAMYFAWLGFYTSAMVYPAVFGSVLYTFTEADQTSRDVSCVVFALFNVIWSTLFLEEWKRRGAELAYKWGTLDSPGEAVEEPRPQFRGVRRISPITRAEEFYYPPWKRLLFQLLVSLPLCLACLVCVFLLMLGCFQLQELVLSVKGLPRLARFLPKVMLALLVSVSAEGYKKLAIWLNDMENYRLESAYEKHLIIKVVLFQFVNSYLSLFYIGFYLKDMERLKEMLATLLITRQFLQNVREVLQPHLYRRLGRGELGLRAVWELARALLGLLSLRRPAPRRLEPQADEGGGGGSGGGGRRCLSGGCGAPEEEEEAALVERRRAGEGGEEGDGPPGGKEEDEDDEEEEDEEEEEDEEEGEEGGLLDCGLRLKKVSFAERGAGRRRPGPSPEALLEEGSPTMVEKGLEPGVFTLAEEDDEAEGAPGSPEREPPAILFRRAGGEGRDQGPDGGPDPEPGSNSDSTRRQRRQNRSSWIDPPEEEHSPQLTQAELESCMKKYEDTFQDYQEMFVQFGYVVLFSSAFPLAALCALVNNLIEIRSDAFKLCTGLQRPFGQRVESIGQWQKVMEAMGVLAIVVNCYLIGQCGQLQRLFPWLSPEAAIVSVVVLEHFALLLKYLIHVAIPDIPGWVAEEMAKLEYQRREAFKRHERQAQHRYQQQQRRRREEEERQRHAEHHARREHDSGGREEARAEGSGLDPATSSEKASAKAKGSTAGGHGPERPKRPGSLLAPNNVMKLKQIIPLQGKFLSSGATSSLAAAGAGATTRPPPAQSPTGSDTRLPAFLSFKFLKSPETRRDSERSHSPPKAFHAGKLFPFGGTRAEPGSNGAGGQARPDGTPSSGSSRVQRSGPVDEALAEELEAPRPEEEGSGTALAPVGAPALRTRRSRSPAPPPPMPLPRPPTPPAGCWQWDGPWGCGGEGAAPRQALAAAECPPCAMAGPPPAPQPLPGDASFYSLPPPPLPPTSDPLETPAPSPSPSPSPQAVCWPSGWH.

Residues 1 to 32 (MAEAASGAGGTSLEGERGKRPPPEGEPAAPAS) are disordered. Alanine 2 carries the N-acetylalanine modification. Residues 2-244 (AEAASGAGGT…DDICDYFGVK (243 aa)) are Extracellular-facing. Residues 14–23 (EGERGKRPPP) are compositionally biased toward basic and acidic residues. Residues 245–265 (IAMYFAWLGFYTSAMVYPAVF) form a helical membrane-spanning segment. Residues 266 to 281 (GSVLYTFTEADQTSRD) are Cytoplasmic-facing. The chain crosses the membrane as a helical span at residues 282–302 (VSCVVFALFNVIWSTLFLEEW). Residues 303–356 (KRRGAELAYKWGTLDSPGEAVEEPRPQFRGVRRISPITRAEEFYYPPWKRLLFQ) lie on the Extracellular side of the membrane. Position 318 is a phosphoserine (serine 318). A helical transmembrane segment spans residues 357 to 377 (LLVSLPLCLACLVCVFLLMLG). The Cytoplasmic portion of the chain corresponds to 378–400 (CFQLQELVLSVKGLPRLARFLPK). Residues 401–421 (VMLALLVSVSAEGYKKLAIWL) traverse the membrane as a helical segment. Residues 422–437 (NDMENYRLESAYEKHL) lie on the Extracellular side of the membrane. The helical transmembrane segment at 438–458 (IIKVVLFQFVNSYLSLFYIGF) threads the bilayer. Residues 459 to 750 (YLKDMERLKE…YEDTFQDYQE (292 aa)) are Cytoplasmic-facing. A disordered region spans residues 524-650 (RRLEPQADEG…SPTMVEKGLE (127 aa)). Residues 532–551 (EGGGGGSGGGGRRCLSGGCG) show a composition bias toward gly residues. The span at 582–606 (EEDEDDEEEEDEEEEEDEEEGEEGG) shows a compositional bias: acidic residues. The residue at position 669 (serine 669) is a Phosphoserine. Residues 681–728 (RAGGEGRDQGPDGGPDPEPGSNSDSTRRQRRQNRSSWIDPPEEEHSPQ) form a disordered region. A helical transmembrane segment spans residues 751–771 (MFVQFGYVVLFSSAFPLAALC). At 772–807 (ALVNNLIEIRSDAFKLCTGLQRPFGQRVESIGQWQK) the chain is on the extracellular side. Serine 801 is subject to Phosphoserine; by FAM20C. The chain crosses the membrane as a helical span at residues 808 to 828 (VMEAMGVLAIVVNCYLIGQCG). The Cytoplasmic portion of the chain corresponds to 829-841 (QLQRLFPWLSPEA). The helical transmembrane segment at 842-862 (AIVSVVVLEHFALLLKYLIHV) threads the bilayer. Topologically, residues 863 to 1232 (AIPDIPGWVA…QAVCWPSGWH (370 aa)) are extracellular. Disordered regions lie at residues 888-970 (RHER…GSLL), 997-1152 (LAAA…WQWD), and 1174-1232 (PPCA…SGWH). Residues 904–932 (RREEEERQRHAEHHARREHDSGGREEARA) show a composition bias toward basic and acidic residues. Low complexity-rich tracts occupy residues 933–953 (EGSG…AKGS) and 997–1006 (LAAAGAGATT). Arginine 1020 carries the asymmetric dimethylarginine; alternate modification. Arginine 1020 bears the Omega-N-methylarginine; alternate mark. Residues 1031–1043 (KSPETRRDSERSH) show a composition bias toward basic and acidic residues. Residues 1078–1087 (TPSSGSSRVQ) are compositionally biased toward polar residues. 2 stretches are compositionally biased toward pro residues: residues 1130–1145 (PAPP…PTPP) and 1197–1221 (LPPP…PSPS).

The protein belongs to the anoctamin family. As to expression, expressed in embryonic stem cells, fetal brain and neural tissues.

The protein resides in the cell membrane. In terms of biological role, does not exhibit calcium-activated chloride channel (CaCC) activity. The sequence is that of Anoctamin-8 (ANO8) from Homo sapiens (Human).